We begin with the raw amino-acid sequence, 395 residues long: Argininosuccinate synthase (395 aa).

8–16 (AYSGGLDTS) provides a ligand contact to ATP. An L-citrulline-binding site is contributed by Y86. Position 116 (G116) interacts with ATP. L-aspartate-binding residues include T118, N122, and D123. N122 contacts L-citrulline. The L-citrulline site is built by R126, S173, S182, E257, and Y269.

Belongs to the argininosuccinate synthase family. Type 1 subfamily. Homotetramer.

It localises to the cytoplasm. The catalysed reaction is L-citrulline + L-aspartate + ATP = 2-(N(omega)-L-arginino)succinate + AMP + diphosphate + H(+). Its pathway is amino-acid biosynthesis; L-arginine biosynthesis; L-arginine from L-ornithine and carbamoyl phosphate: step 2/3. The chain is Argininosuccinate synthase from Methanocaldococcus jannaschii (strain ATCC 43067 / DSM 2661 / JAL-1 / JCM 10045 / NBRC 100440) (Methanococcus jannaschii).